The following is a 284-amino-acid chain: MKTSDIAALEQTVEKAFENRDSVNTETRGEIREAVEAALDLLDSGGMRVAQRGEDGQWTVNQWLKKAVLLSFRLNPMQIIKGGPGDAVWWDKVSSKFDGWSSNEFEKAGFRAVPNCIVRRSAYIAPGAVLMPSFVNLGAYVGRNTMVDTWATVGSCAQIGENVHLSGGVGIGGVLEPMQAGPTIIEDNCFIGARSEVVEGCIVREGSVLGMGVFIGKSTKIVDRETGQIFYGEVPPYSVVVAGTMPGKTMANGEPGPNLYCAVIVKRVDEKTRSKTSINDLLRD.

Substrate-binding residues include Arg-111 and Asp-148.

Belongs to the transferase hexapeptide repeat family. Homotrimer.

The protein resides in the cytoplasm. The catalysed reaction is (S)-2,3,4,5-tetrahydrodipicolinate + succinyl-CoA + H2O = (S)-2-succinylamino-6-oxoheptanedioate + CoA. Its pathway is amino-acid biosynthesis; L-lysine biosynthesis via DAP pathway; LL-2,6-diaminopimelate from (S)-tetrahydrodipicolinate (succinylase route): step 1/3. This chain is 2,3,4,5-tetrahydropyridine-2,6-dicarboxylate N-succinyltransferase, found in Chelativorans sp. (strain BNC1).